Reading from the N-terminus, the 415-residue chain is Mitogen-activated protein kinase kinae MST7 (415 aa).

The segment at 1–37 is disordered; that stretch reads MADPFAPRTMKRRNVKGLALTPAAPKPPPTAENAPIH. One can recognise a Protein kinase domain in the interval 61-326; that stretch reads LEVIKDLGSG…EELFERDPFV (266 aa). ATP contacts are provided by residues 67–75 and Lys90; that span reads LGSGNGGTV. The disordered stretch occupies residues 363–409; it reads DLLRSSDSPTATYHGDDRPLETPTSAYRVDPRRGPAEGSAGLADQVD.

The protein belongs to the protein kinase superfamily. STE Ser/Thr protein kinase family. MAP kinase kinase subfamily. As to quaternary structure, homodimer. Interacts with the adapter protein MST50. Interacts with TRX2.

It catalyses the reaction L-seryl-[protein] + ATP = O-phospho-L-seryl-[protein] + ADP + H(+). The enzyme catalyses L-threonyl-[protein] + ATP = O-phospho-L-threonyl-[protein] + ADP + H(+). Its function is as follows. Mitogen-activated protein kinase kinase; part of the MST11-MST7-PMK1 MAP kinase (MAPK) cascade that is essential for appressorium formation, penetration and invasive growth. The MST11-MST7-PMK1 MAP kinase cascade transduces signals from the cell surface sensors MDB2 and SHO1 that recognize various surface signals such as surface hydrophobicity, cutin monomers, and rice leaf waxes. MST7 acts as the upstream MAPKK that directly phosphorylates MAP kinase PMK1. This chain is Mitogen-activated protein kinase kinae MST7, found in Pyricularia oryzae (strain 70-15 / ATCC MYA-4617 / FGSC 8958) (Rice blast fungus).